Here is an 87-residue protein sequence, read N- to C-terminus: Small ribosomal subunit protein bS20 (87 aa).

The tract at residues 1–21 (MANIKQQIKRNKTNEKRRLKN) is disordered. Over residues 7–20 (QIKRNKTNEKRRLK) the composition is skewed to basic residues.

Belongs to the bacterial ribosomal protein bS20 family.

Functionally, binds directly to 16S ribosomal RNA. The polypeptide is Small ribosomal subunit protein bS20 (Phytoplasma mali (strain AT)).